A 303-amino-acid polypeptide reads, in one-letter code: Putative monooxygenase p33MONOX (303 aa).

Disordered regions lie at residues 1-20 (MASR…LGKM), 37-56 (LEDP…IPWK), 66-96 (HLDK…KAPV), 156-233 (KLQS…LQKS), and 260-283 (RVGE…GKKQ). Thr-44 is modified (phosphothreonine). Residues 67–77 (LDKTEEGAASV) carry the Flavin-containing monooxygenase motif motif. Positions 76–89 (SVSSLAVTPSPATD) are enriched in polar residues. The span at 170 to 183 (ASAQSTPSSTPHAS) shows a compositional bias: low complexity. Thr-175 bears the Phosphothreonine mark. The residue at position 183 (Ser-183) is a Phosphoserine.

It belongs to the P33MONOX family. As to quaternary structure, interacts with NELFB, NOL12 and PRNP. Expressed in neuronal pyramidal cells of the hippocampus and in the neurons of the cortex.

It localises to the cytoplasm. Potential NADPH-dependent oxidoreductase. May be involved in the regulation of neuronal survival, differentiation and axonal outgrowth. This is Putative monooxygenase p33MONOX (P33monox) from Mus musculus (Mouse).